The sequence spans 120 residues: Small ribosomal subunit protein uS17m (120 aa).

The N-terminal 20 residues, 1 to 20 (MSIVRSSVHAKWVVGKVIGT), are a transit peptide targeting the mitochondrion.

Belongs to the universal ribosomal protein uS17 family. Component of the mitochondrial ribosome small subunit (28S) which comprises a 12S rRNA and about 30 distinct proteins.

It is found in the mitochondrion. This chain is Small ribosomal subunit protein uS17m (Mrps17), found in Mus musculus (Mouse).